Reading from the N-terminus, the 495-residue chain is Transcription termination/antitermination protein NusA (495 aa).

The region spanning 135 to 200 (GEIITGVVKK…RGAQLFVTRS (66 aa)) is the S1 motif domain. Positions 302-368 (KHTMDIAVEA…FTKYLDIDED (67 aa)) constitute a KH domain. Tandem repeats lie at residues 364–414 (DIDE…KNAL) and 439–489 (GVDR…RNIC). Residues 364-489 (DIDEDFATVL…ALIMAARNIC (126 aa)) form a 2 X 51 AA approximate repeats region.

It belongs to the NusA family. In terms of assembly, monomer. Binds directly to the core enzyme of the DNA-dependent RNA polymerase and to nascent RNA.

It is found in the cytoplasm. Functionally, participates in both transcription termination and antitermination. This is Transcription termination/antitermination protein NusA from Shigella flexneri.